A 609-amino-acid chain; its full sequence is Putative cell agglutination protein pfl4 (609 aa).

An N-terminal signal peptide occupies residues 1 to 21 (MLFLRFFIFTFFTSIFTVVVS). Residue Asn-75 is glycosylated (N-linked (GlcNAc...) asparagine). The segment at 75–391 (NHSTIYTTIN…ASTVVVIPTA (317 aa)) is 9 X 36 AA approximate tandem repeats. A run of 9 repeats spans residues 77 to 110 (STIY…EPTA), 111 to 146 (GTVT…EPLA), 147 to 182 (GTVT…EPAV), 183 to 218 (GTVT…EPTA), 219 to 254 (GTVT…EPAV), 255 to 290 (GTVT…EPAV), 291 to 325 (GTVT…QPTG), 326 to 361 (GTVT…LPGP), and 362 to 391 (STIY…IPTA). The N-linked (GlcNAc...) asparagine glycan is linked to Asn-161. The PA14 domain maps to 427 to 589 (FTQPAYFGSS…NSYNPTSYAY (163 aa)).

Belongs to the mam3/map4 family.

It is found in the cell surface. In terms of biological role, may be involved in agglutination during conjugation or other aspects of colony formation. Induces flocculation when overexpressed. This chain is Putative cell agglutination protein pfl4, found in Schizosaccharomyces pombe (strain 972 / ATCC 24843) (Fission yeast).